Consider the following 903-residue polypeptide: Protein translocase subunit SecA (903 aa).

ATP is bound by residues glutamine 85, 103-107 (GEGKT), and aspartate 492. The segment at 863–890 (GDGVKQPVRRDKKVGRNSPCPCGSGKKY) is disordered. Zn(2+) is bound by residues cysteine 882, cysteine 884, cysteine 893, and cysteine 894.

Belongs to the SecA family. As to quaternary structure, monomer and homodimer. Part of the essential Sec protein translocation apparatus which comprises SecA, SecYEG and auxiliary proteins SecDF. Other proteins may also be involved. Requires Zn(2+) as cofactor.

The protein resides in the cell membrane. The protein localises to the cytoplasm. It carries out the reaction ATP + H2O + cellular proteinSide 1 = ADP + phosphate + cellular proteinSide 2.. Its function is as follows. Part of the Sec protein translocase complex. Interacts with the SecYEG preprotein conducting channel. Has a central role in coupling the hydrolysis of ATP to the transfer of proteins into and across the cell membrane, serving as an ATP-driven molecular motor driving the stepwise translocation of polypeptide chains across the membrane. The polypeptide is Protein translocase subunit SecA (Desulforudis audaxviator (strain MP104C)).